A 276-amino-acid chain; its full sequence is Small ribosomal subunit protein uS2 (276 aa).

Belongs to the universal ribosomal protein uS2 family.

The protein is Small ribosomal subunit protein uS2 of Chlamydia caviae (strain ATCC VR-813 / DSM 19441 / 03DC25 / GPIC) (Chlamydophila caviae).